A 358-amino-acid polypeptide reads, in one-letter code: D-alanine--D-alanine ligase B (358 aa).

The region spanning 147 to 352 (KYVLENFKFK…YSALIDELIE (206 aa)) is the ATP-grasp domain. Position 179-234 (179-234 (VEKLQYDVFIKPANSGSSVGITKAHNKEELLKGLEEAFIHDKNVLVEEAINAREIE)) interacts with ATP. Asp-305, Glu-319, and Asn-321 together coordinate Mg(2+).

Belongs to the D-alanine--D-alanine ligase family. It depends on Mg(2+) as a cofactor. Mn(2+) is required as a cofactor.

It localises to the cytoplasm. It carries out the reaction 2 D-alanine + ATP = D-alanyl-D-alanine + ADP + phosphate + H(+). It participates in cell wall biogenesis; peptidoglycan biosynthesis. Its function is as follows. Cell wall formation. The protein is D-alanine--D-alanine ligase B of Clostridium tetani (strain Massachusetts / E88).